The following is a 467-amino-acid chain: Dihydroorotase (467 aa).

2 residues coordinate Zn(2+): histidine 60 and histidine 62. Substrate contacts are provided by residues 62-64 and asparagine 94; that span reads HFR. 4 residues coordinate Zn(2+): glutamate 146, histidine 180, histidine 234, and aspartate 313. Aspartate 313 is a catalytic residue. Histidine 317 serves as a coordination point for substrate. Residues 439–467 are disordered; it reads KPGRGEFLEGSGKRSEEDEEENSEETGSD. Over residues 441 to 454 the composition is skewed to basic and acidic residues; that stretch reads GRGEFLEGSGKRSE. A compositionally biased stretch (acidic residues) spans 455–467; sequence EDEEENSEETGSD.

This sequence belongs to the metallo-dependent hydrolases superfamily. DHOase family. Class I DHOase subfamily. Requires Zn(2+) as cofactor.

The enzyme catalyses (S)-dihydroorotate + H2O = N-carbamoyl-L-aspartate + H(+). Its pathway is pyrimidine metabolism; UMP biosynthesis via de novo pathway; (S)-dihydroorotate from bicarbonate: step 3/3. Catalyzes the reversible cyclization of carbamoyl aspartate to dihydroorotate. The chain is Dihydroorotase from Methanosarcina acetivorans (strain ATCC 35395 / DSM 2834 / JCM 12185 / C2A).